Reading from the N-terminus, the 413-residue chain is Serine hydroxymethyltransferase (413 aa).

(6S)-5,6,7,8-tetrahydrofolate is bound by residues Leu117 and 121 to 123 (GHL). Lys226 carries the N6-(pyridoxal phosphate)lysine modification. (6S)-5,6,7,8-tetrahydrofolate is bound by residues Glu239 and 349-351 (SPF).

It belongs to the SHMT family. Homodimer. It depends on pyridoxal 5'-phosphate as a cofactor.

It localises to the cytoplasm. It catalyses the reaction (6R)-5,10-methylene-5,6,7,8-tetrahydrofolate + glycine + H2O = (6S)-5,6,7,8-tetrahydrofolate + L-serine. The protein operates within one-carbon metabolism; tetrahydrofolate interconversion. It participates in amino-acid biosynthesis; glycine biosynthesis; glycine from L-serine: step 1/1. Catalyzes the reversible interconversion of serine and glycine with tetrahydrofolate (THF) serving as the one-carbon carrier. This reaction serves as the major source of one-carbon groups required for the biosynthesis of purines, thymidylate, methionine, and other important biomolecules. Also exhibits THF-independent aldolase activity toward beta-hydroxyamino acids, producing glycine and aldehydes, via a retro-aldol mechanism. This is Serine hydroxymethyltransferase from Bacillus cereus (strain AH820).